The primary structure comprises 263 residues: 3-deoxy-manno-octulosonate cytidylyltransferase (263 aa).

The protein belongs to the KdsB family.

The protein resides in the cytoplasm. The catalysed reaction is 3-deoxy-alpha-D-manno-oct-2-ulosonate + CTP = CMP-3-deoxy-beta-D-manno-octulosonate + diphosphate. The protein operates within nucleotide-sugar biosynthesis; CMP-3-deoxy-D-manno-octulosonate biosynthesis; CMP-3-deoxy-D-manno-octulosonate from 3-deoxy-D-manno-octulosonate and CTP: step 1/1. It functions in the pathway bacterial outer membrane biogenesis; lipopolysaccharide biosynthesis. In terms of biological role, activates KDO (a required 8-carbon sugar) for incorporation into bacterial lipopolysaccharide in Gram-negative bacteria. This Burkholderia cenocepacia (strain HI2424) protein is 3-deoxy-manno-octulosonate cytidylyltransferase.